We begin with the raw amino-acid sequence, 224 residues long: Small ribosomal subunit protein uS3 (224 aa).

The region spanning 39–107 (IREFLKKKPS…DVWVEIAEVK (69 aa)) is the KH type-2 domain.

This sequence belongs to the universal ribosomal protein uS3 family. In terms of assembly, part of the 30S ribosomal subunit. Forms a tight complex with proteins S10 and S14.

Binds the lower part of the 30S subunit head. Binds mRNA in the 70S ribosome, positioning it for translation. This Chlamydia trachomatis serovar L2 (strain ATCC VR-902B / DSM 19102 / 434/Bu) protein is Small ribosomal subunit protein uS3.